Reading from the N-terminus, the 345-residue chain is S-adenosylmethionine:tRNA ribosyltransferase-isomerase (345 aa).

This sequence belongs to the QueA family. In terms of assembly, monomer.

It is found in the cytoplasm. The enzyme catalyses 7-aminomethyl-7-carbaguanosine(34) in tRNA + S-adenosyl-L-methionine = epoxyqueuosine(34) in tRNA + adenine + L-methionine + 2 H(+). Its pathway is tRNA modification; tRNA-queuosine biosynthesis. Transfers and isomerizes the ribose moiety from AdoMet to the 7-aminomethyl group of 7-deazaguanine (preQ1-tRNA) to give epoxyqueuosine (oQ-tRNA). This chain is S-adenosylmethionine:tRNA ribosyltransferase-isomerase, found in Helicobacter pylori (strain P12).